The sequence spans 226 residues: Clarin-3 (226 aa).

The chain crosses the membrane as a helical span at residues 8-28 (LMFLSGFLTSLGSVVVICSIL). N-linked (GlcNAc...) asparagine glycosylation is present at Asn-46. A run of 3 helical transmembrane segments spans residues 92–112 (VVILLLILSLAASVLSSVFTF), 128–148 (GVYTWNGLSASFVFLAMVLFV), and 181–201 (FWLTLHVIFLNIVTAVIIIFY).

Belongs to the clarin family.

It is found in the membrane. The polypeptide is Clarin-3 (Clrn3) (Mus musculus (Mouse)).